The sequence spans 334 residues: MLLIGVAGTELSAQERDWLQHDAVAGVVLFKRNFGSRSQVVELSAAIRAAAPRPVLICVDQEGGRVQRFREGFSALAPLQSFGAQYAQAPEAALAAARAHAQLMASEVRASGVDLSFAPVVDLGRGNRAIGDRAFSDDPQIVATFTRAYVQALHGAGMAATLKHFPGHGTVLEDTHVDHASDPRPLEALQAEDLVPFVAGIEAGADAVMMAHVVYPQVAPEPAGYSQRWIEQILRGQMGFRGVVFSDDIGMAASFSAGGVAGRVHAHLDAGCDVVLVCHPELVAESLQAVQGRRLNTAALIGLIGRGALGWDGLLAGTDVSFTTPHSAHFGTTA.

Residues Asp60, Arg68, Arg133, and 163–164 each bind substrate; that span reads KH. His176 functions as the Proton donor/acceptor in the catalytic mechanism. Asp247 acts as the Nucleophile in catalysis.

The protein belongs to the glycosyl hydrolase 3 family. NagZ subfamily.

It is found in the cytoplasm. The catalysed reaction is Hydrolysis of terminal non-reducing N-acetyl-D-hexosamine residues in N-acetyl-beta-D-hexosaminides.. It functions in the pathway cell wall biogenesis; peptidoglycan recycling. Functionally, plays a role in peptidoglycan recycling by cleaving the terminal beta-1,4-linked N-acetylglucosamine (GlcNAc) from peptide-linked peptidoglycan fragments, giving rise to free GlcNAc, anhydro-N-acetylmuramic acid and anhydro-N-acetylmuramic acid-linked peptides. This Xanthomonas oryzae pv. oryzae (strain MAFF 311018) protein is Beta-hexosaminidase.